The sequence spans 95 residues: Small ribosomal subunit protein uS17 (95 aa).

This sequence belongs to the universal ribosomal protein uS17 family. Part of the 30S ribosomal subunit.

One of the primary rRNA binding proteins, it binds specifically to the 5'-end of 16S ribosomal RNA. The chain is Small ribosomal subunit protein uS17 from Streptomyces coelicolor (strain ATCC BAA-471 / A3(2) / M145).